A 189-amino-acid polypeptide reads, in one-letter code: MKTGKELKPGTVIRIDNDPWLVQKAEFTKSGRNSAIMKTKLKNLLTGYKTETVYGADDKLDDVILDRKEATLSFISGDSYTFMDTTDYTMYELNAEDIESVLPFVEEGMTDVCEAVFFEGRLVSVELPTTIVRQVDYTEGSARGDTSGKVMKPAKLKNGTELSVADFIEIGDMIEIDTREGGSYKGRAK.

It belongs to the elongation factor P family.

The protein localises to the cytoplasm. Its pathway is protein biosynthesis; polypeptide chain elongation. Involved in peptide bond synthesis. Stimulates efficient translation and peptide-bond synthesis on native or reconstituted 70S ribosomes in vitro. Probably functions indirectly by altering the affinity of the ribosome for aminoacyl-tRNA, thus increasing their reactivity as acceptors for peptidyl transferase. The polypeptide is Elongation factor P (Pseudomonas fluorescens (strain Pf0-1)).